The sequence spans 419 residues: MSGNSSTDMYLFKKSLKELKGKKGKGTELISVYVPAGRRLSDISQYLRQELSQSSNIKSKTTMKNVQSAIEVILQRLKLLKEPLEMGVIIFAGMIPRGGPGTEKMEVYVLEPPEPVKTFVYRCDSLFYTDPLEDFIQDTEVYGVILVDRNEATIGTVKGKTITVLKKLTSGVPGKFKAGGQSARRLERLIDDAAHQFMVRIGEYATESFMPILEEKKLKGLLLGGPGNTKNEFAEKDYLHHELKKKIIDTFDLCYTEEFGIRELLDKASDLLRDLDLMKEKNLIQKFFKELIKDDGGLSAYGEAQVMKYLEMGAIDTLIVTEDIGITRVTVKCNNCDYAQEVNVKTNEMFKFEEQLKTKACPTCGGAMYIDEEKDIIEHLSDLCHMHNTDIIVVSTDTEEGSQISRAFKGMAAILRYKL.

The protein belongs to the eukaryotic release factor 1 family. As to quaternary structure, heterodimer of two subunits, one of which binds GTP.

The protein resides in the cytoplasm. Its function is as follows. Directs the termination of nascent peptide synthesis (translation) in response to the termination codons UAA, UAG and UGA. In Methanococcus maripaludis (strain C5 / ATCC BAA-1333), this protein is Peptide chain release factor subunit 1.